The sequence spans 208 residues: Hydrolase phiM (208 aa).

Serine 87 (charge relay system) is an active-site residue.

Belongs to the LovG family.

It participates in secondary metabolite biosynthesis. In terms of biological role, hydrolase; part of the gene cluster that mediates the biosynthesis of the antihypercholesterolemic agents phomoidrides which are dimeric anhydrides. Within the pathway, phiM releases the C12-fatty acyl chain from phiA. The pathway begins with the highly reducing polyketide synthase phiA that catalyzes the formation of a C12-fatty acyl-ACP, starting from one acetate and 5 malonate units. The hydrolase phiM is involved in the release of the C12-fatty acyl chain from phiA. The alkylcitrate synthase (ACS) phiJ and the alkylcitrate dehydratase (ACDH) phiI then give rise to decarboxylated monomeric anhydrides by coupling the C12-fatty acyl chain with oxalacetic acid. The cyclase phiC is responsible for the dimerization of the monomeric anhydrides which leads to the production of prephomoidride that contains the characteristic bicyclo[4.3.1]deca-1,6-diene system of phomoidrides. Iterative oxidation catalyzed by the alpha-ketoglutarate-dependent dioxygenase phiK produced then phomoidride A. Finally, the methyltransferase phiE converts phomoidride A to phomoidride B via an acetalization reaction. The phosphatidylethanolamine-binding protein phiB and phiN are not essential for dimerization and their functions have still to be determined. In Fungal sp. (strain ATCC 74256), this protein is Hydrolase phiM.